Here is a 62-residue protein sequence, read N- to C-terminus: Agnoprotein (62 aa).

At 1 to 23 the chain is on the cytoplasmic side; it reads MVLRRLSRQASVKVRRSWTESKK. Residues 24 to 40 traverse the membrane as a helical; Signal-anchor for type II membrane protein segment; sequence TAQRLFVFVLELLLQFC. Residues 41-62 are Extracellular-facing; it reads EGEDTVDGKRKKPERLTEKPES.

This sequence belongs to the polyomaviruses agnoprotein family. Homooligomer. Interacts with VP1. Interacts with large T antigen; this interaction may impact upon the activity of T-antigen on the control of viral gene transcription and replication. Interacts with small t antigen. Interacts with host CBX5; this interaction induces the dissociation of CBX5 from LBR, resulting in destabilization of the nuclear envelope. In terms of processing, phosphorylated by host kinase. Phosphorylation segregates agnoprotein in cytoplasm, whereas unphosphorylated agnoprotein migrate to the nucleus.

The protein resides in the host cytoplasm. It localises to the host nucleus membrane. Its subcellular location is the host rough endoplasmic reticulum membrane. The protein localises to the host cell membrane. In terms of biological role, alters the structure of the nuclear envelope by interacting with host CBX5 and disrupting CBX5 association with LBR. Involved in the perinuclear-nuclear localization of the capsid protein VP1 during virion assembly and maturation. Plays an important role in the release of progeny virions from infected cells and in viral propagation, probably by acting as a viral ionic channel in the host plasma membrane. Allows influx of extracellular calcium ions in the host cell. May contribute to viral genome transcription and translation of viral late proteins. This chain is Agnoprotein, found in Simian virus 40 (SV40).